The following is a 445-amino-acid chain: UDP-N-acetylmuramoylalanine--D-glutamate ligase (445 aa).

126–132 lines the ATP pocket; the sequence is GTSGKTT.

Belongs to the MurCDEF family.

The protein resides in the cytoplasm. The enzyme catalyses UDP-N-acetyl-alpha-D-muramoyl-L-alanine + D-glutamate + ATP = UDP-N-acetyl-alpha-D-muramoyl-L-alanyl-D-glutamate + ADP + phosphate + H(+). It participates in cell wall biogenesis; peptidoglycan biosynthesis. In terms of biological role, cell wall formation. Catalyzes the addition of glutamate to the nucleotide precursor UDP-N-acetylmuramoyl-L-alanine (UMA). This is UDP-N-acetylmuramoylalanine--D-glutamate ligase from Nitratidesulfovibrio vulgaris (strain DSM 19637 / Miyazaki F) (Desulfovibrio vulgaris).